The following is a 68-amino-acid chain: ATP-dependent 6-phosphofructokinase (68 aa).

17–20 (GDGT) is an ATP binding site. Asp18 serves as a coordination point for Mg(2+). The active-site Proton acceptor is Asp48.

Belongs to the phosphofructokinase type A (PFKA) family. PPi-dependent PFK group II subfamily. Atypical ATP-dependent clade 'X' sub-subfamily. As to quaternary structure, homotetramer. The cofactor is Mg(2+).

It localises to the cytoplasm. It carries out the reaction beta-D-fructose 6-phosphate + ATP = beta-D-fructose 1,6-bisphosphate + ADP + H(+). It participates in carbohydrate degradation; glycolysis; D-glyceraldehyde 3-phosphate and glycerone phosphate from D-glucose: step 3/4. Its activity is regulated as follows. Allosterically activated by AMP. In terms of biological role, catalyzes the phosphorylation of D-fructose 6-phosphate to fructose 1,6-bisphosphate by ATP, the first committing step of glycolysis. This is ATP-dependent 6-phosphofructokinase (PFK) from Triticum aestivum (Wheat).